Here is a 181-residue protein sequence, read N- to C-terminus: Mating-type M-specific polypeptide Mc (181 aa).

The segment at residues 103–171 (TPRPPNAFIL…QHQKMYPGYK (69 aa)) is a DNA-binding region (HMG box).

It is found in the nucleus. The protein resides in the cytoplasm. The protein localises to the cytoskeleton. It localises to the microtubule organizing center. Its subcellular location is the spindle pole body. Functionally, mating type proteins are sequence specific DNA-binding proteins that act as master switches in yeast differentiation by controlling gene expression in a cell type-specific fashion. Positive regulator of MFM genes. The HMG box recognizes the DNA sequence 5'-AACAAAG-3'. Required for conjugation and efficient meiosis. This Schizosaccharomyces pombe (Fission yeast) protein is Mating-type M-specific polypeptide Mc (mat3-Mc).